The primary structure comprises 283 residues: Adenylate kinase 2, chloroplastic (283 aa).

The transit peptide at 1 to 59 (MTGCVNSISPPPVTLYRHRASPSRSSFSLSGDALHSLYRHRRVSRSPSIIAPKFQIVAA) directs the protein to the chloroplast. Residue 74–79 (ASGKGT) coordinates ATP. The interval 94 to 123 (SAGDLLRAEIASGSENGRRAKEHMEKGQLV) is NMP. AMP contacts are provided by residues arginine 100, 121–123 (QLV), 150–153 (GYPR), and glutamine 157. Positions 187 to 220 (GRRLDPVTGKIYHLKYSPPETEEIAVRLTQRFDD) are LID. Residue arginine 188 coordinates ATP. Arginine 217 and arginine 228 together coordinate AMP.

Belongs to the adenylate kinase family. As to quaternary structure, monomer.

It is found in the plastid. The protein resides in the chloroplast stroma. The catalysed reaction is AMP + ATP = 2 ADP. Functionally, catalyzes the reversible transfer of the terminal phosphate group between ATP and AMP. Plays an important role in cellular energy homeostasis and in adenine nucleotide metabolism. Plays a major role in the equilibration of adenylates and de novo synthesis of ADP in the plastid stroma. This Arabidopsis thaliana (Mouse-ear cress) protein is Adenylate kinase 2, chloroplastic.